Here is a 1033-residue protein sequence, read N- to C-terminus: Error-prone DNA polymerase (1033 aa).

It belongs to the DNA polymerase type-C family. DnaE2 subfamily.

It is found in the cytoplasm. The enzyme catalyses DNA(n) + a 2'-deoxyribonucleoside 5'-triphosphate = DNA(n+1) + diphosphate. Its function is as follows. DNA polymerase involved in damage-induced mutagenesis and translesion synthesis (TLS). It is not the major replicative DNA polymerase. The polypeptide is Error-prone DNA polymerase (Teredinibacter turnerae (strain ATCC 39867 / T7901)).